Consider the following 79-residue polypeptide: Cell division protein ZapB (79 aa).

Positions 6–78 (FEKLEVKVQQ…LRALLGKMEE (73 aa)) form a coiled coil.

The protein belongs to the ZapB family. In terms of assembly, homodimer. The ends of the coiled-coil dimer bind to each other, forming polymers. Interacts with FtsZ.

Its subcellular location is the cytoplasm. Non-essential, abundant cell division factor that is required for proper Z-ring formation. It is recruited early to the divisome by direct interaction with FtsZ, stimulating Z-ring assembly and thereby promoting cell division earlier in the cell cycle. Its recruitment to the Z-ring requires functional FtsA or ZipA. The protein is Cell division protein ZapB of Yersinia enterocolitica serotype O:8 / biotype 1B (strain NCTC 13174 / 8081).